Reading from the N-terminus, the 33-residue chain is Alpha-amanitin proprotein (33 aa).

A propeptide spanning residues 1-10 (MSDINATRLP) is cleaved from the precursor. A (3R,4R)-4,5-dihydroxyisoleucine; in form alpha-amanitin modification is found at I11. At I11 the chain carries (3R,4S)-4-hydroxyisoleucine; in form gamma-amanitin. The segment at residues 11–18 (IWGIGCNP) is a cross-link (cyclopeptide (Ile-Pro)). A cross-link (2'-cysteinyl-6'-hydroxytryptophan sulfoxide (Trp-Cys)) is located at residues 12–16 (WGIGC). P18 is modified (4-hydroxyproline). The propeptide occupies 19 to 33 (CVGDEVTALLTRGEA).

The protein belongs to the MSDIN fungal toxin family. Processed by the macrocyclase-peptidase enzyme POPB to yield a toxic cyclic decapeptide. POPB first removes 10 residues from the N-terminus. Conformational trapping of the remaining peptide forces the enzyme to release this intermediate rather than proceed to macrocyclization. The enzyme rebinds the remaining peptide in a different conformation and catalyzes macrocyclization of the N-terminal 8 residues.

Major toxin belonging to the bicyclic octapeptides amatoxins that acts by binding non-competitively to RNA polymerase II and greatly slowing the elongation of transcripts from target promoters. The sequence is that of Alpha-amanitin proprotein from Amanita fuligineoides.